Here is a 1016-residue protein sequence, read N- to C-terminus: DNA polymerase I (1016 aa).

Residues M1–V308 enclose the 5'-3' exonuclease domain. The interval G334 to P361 is disordered. One can recognise a 3'-5' exonuclease domain in the interval S394–R630. Positions G768 to H1016 are polymerase.

Belongs to the DNA polymerase type-A family. In terms of assembly, single-chain monomer with multiple functions.

It carries out the reaction DNA(n) + a 2'-deoxyribonucleoside 5'-triphosphate = DNA(n+1) + diphosphate. In terms of biological role, in addition to polymerase activity, this DNA polymerase exhibits 3'-5' and 5'-3' exonuclease activity. This is DNA polymerase I (polA) from Rhizobium leguminosarum.